Here is a 372-residue protein sequence, read N- to C-terminus: MHC class I-like protein MILL2 (372 aa).

The first 26 residues, 1 to 26 (MEASSGTAGPAVLLLILALLLTESQG), serve as a signal peptide directing secretion. An alpha-1 region spans residues 28-119 (RSQGTHTLRY…MINQKGHDKG (92 aa)). 3 cysteine pairs are disulfide-bonded: C78-C89, C129-C191, and C230-C287. An alpha-2 region spans residues 120 to 210 (PYTLQATLDC…SLSNVLPDTG (91 aa)). N134, N234, and N293 each carry an N-linked (GlcNAc...) asparagine glycan. Residues 192-302 (PARLQRHLAS…NRTIMQTAVS (111 aa)) enclose the Ig-like C1-type domain. Residues 211–339 (SPVVIVTCRN…VVDGGLVTGN (129 aa)) are alpha-3. Residues 308 to 349 (WPSASWATRQEAEGPHRTHNDHVVDGGLVTGNANKDSPDASS) are disordered. Residues 317 to 331 (QEAEGPHRTHNDHVV) are compositionally biased toward basic and acidic residues. The connecting peptide stretch occupies residues 340-348 (ANKDSPDAS). Residue S349 is the site of GPI-anchor amidated serine attachment. The propeptide at 350 to 372 (CATASAISAFPVVVLSVALPRAN) is removed in mature form.

Belongs to the MHC class I family. In terms of assembly, heterodimer with B2M. Ubiquitously expressed in neonatal and adult tissues.

It is found in the cell membrane. Binds to heparan sulfate proteoglycans on the surface of fibroblast cells. In Rattus norvegicus (Rat), this protein is MHC class I-like protein MILL2.